A 223-amino-acid polypeptide reads, in one-letter code: Probable amino-acid ABC transporter permease protein PatM (223 aa).

Residues Leu19–Gln210 form the ABC transmembrane type-1 domain. Helical transmembrane passes span Met23 to Ile43, Ile59 to Leu78, Ala90 to Ile110, Phe156 to Ala176, and Phe186 to Leu206.

It belongs to the binding-protein-dependent transport system permease family. HisMQ subfamily.

Its subcellular location is the cell inner membrane. Probably part of a binding-protein-dependent transport system for an amino acid. Probably responsible for the translocation of the substrate across the membrane. The chain is Probable amino-acid ABC transporter permease protein PatM (patM) from Vibrio harveyi (Beneckea harveyi).